The sequence spans 240 residues: Phosphoribosylaminoimidazole-succinocarboxamide synthase (240 aa).

Belongs to the SAICAR synthetase family.

The enzyme catalyses 5-amino-1-(5-phospho-D-ribosyl)imidazole-4-carboxylate + L-aspartate + ATP = (2S)-2-[5-amino-1-(5-phospho-beta-D-ribosyl)imidazole-4-carboxamido]succinate + ADP + phosphate + 2 H(+). Its pathway is purine metabolism; IMP biosynthesis via de novo pathway; 5-amino-1-(5-phospho-D-ribosyl)imidazole-4-carboxamide from 5-amino-1-(5-phospho-D-ribosyl)imidazole-4-carboxylate: step 1/2. The sequence is that of Phosphoribosylaminoimidazole-succinocarboxamide synthase from Anoxybacillus flavithermus (strain DSM 21510 / WK1).